Here is a 391-residue protein sequence, read N- to C-terminus: MKIVLAYSGGLDTTVAIRWLRETFNADVTTVTVDVGQKDDFYQIEKRAYIAGAIKHYTIDAKKDFAERYISYAIKMNGLYEDIYPLSTALARPLIVEKVVEIAKKIGAEAIAHGSTSKGNDQVRFDLAVKALYPEAKIIAPARIWNMTRDKEIEYAKSKGIPIKTESSKYSIDENLWGRSIEGDIISDPSKEVPEDAFEWTKKTKDDKLKISLTFDKGLPVEVNGEKMDLLKVIQVLNELVGSRGFGRVEHLENRVVGFKSREVYEVPAALVLINSHKDLEKSTYTPLEFRFKRSLDGQWSDLVYQGLWFEPLRETIQIAGDNLNKWISGEVFIEVENGNMKILGRKGKFSPFSEEIASYNKGWYPSDEMARGFIEIFGMHSLVARKSRGI.

Residue A6–T14 participates in ATP binding. Position 84 (Y84) interacts with L-citrulline. G114 contributes to the ATP binding site. Positions 116, 120, and 121 each coordinate L-aspartate. N120 is a binding site for L-citrulline. Residues R124, S171, S180, E253, and Y265 each coordinate L-citrulline.

It belongs to the argininosuccinate synthase family. Type 1 subfamily. As to quaternary structure, homotetramer.

The protein localises to the cytoplasm. It catalyses the reaction L-citrulline + L-aspartate + ATP = 2-(N(omega)-L-arginino)succinate + AMP + diphosphate + H(+). Its pathway is amino-acid biosynthesis; L-arginine biosynthesis; L-arginine from L-ornithine and carbamoyl phosphate: step 2/3. In Sulfolobus acidocaldarius (strain ATCC 33909 / DSM 639 / JCM 8929 / NBRC 15157 / NCIMB 11770), this protein is Argininosuccinate synthase.